The sequence spans 249 residues: 2-C-methyl-D-erythritol 4-phosphate cytidylyltransferase (249 aa).

This sequence belongs to the IspD/TarI cytidylyltransferase family. IspD subfamily.

The enzyme catalyses 2-C-methyl-D-erythritol 4-phosphate + CTP + H(+) = 4-CDP-2-C-methyl-D-erythritol + diphosphate. Its pathway is isoprenoid biosynthesis; isopentenyl diphosphate biosynthesis via DXP pathway; isopentenyl diphosphate from 1-deoxy-D-xylulose 5-phosphate: step 2/6. Functionally, catalyzes the formation of 4-diphosphocytidyl-2-C-methyl-D-erythritol from CTP and 2-C-methyl-D-erythritol 4-phosphate (MEP). This Thermobifida fusca (strain YX) protein is 2-C-methyl-D-erythritol 4-phosphate cytidylyltransferase.